We begin with the raw amino-acid sequence, 472 residues long: MATKCTKCGPGYATPLEAMKGPREEIVYLPCIYRNTGIEAPDYLATVDVDPKSPHYSQVIHRLPMPHLKDELHHSGWNTCSSCFGDSTKSRDKLILPSIISSRIYVVDVGSEPRAPKLHKVIEPNEIHAKCNLGNLHTSHCLASGEVMISSLGDPQGNGKGGFVLLDGETFEVKGTWEKPGGEAPMGYDFWYQPRHNIMVSTEWAAPNVFKDGFNPAHVEAGLYGSHIHVWDWQRHEIIQTLQMKDGLIPLEIRFLHDPDATQGFVGCALSSNIQRFYKNEGGTWSVEKVIQVPSKKVKGWMLPEMPGLITDILLSLDDRFLYFSNWLHGDIRQYDISNPKKPRLTGQIFLGGSIVKGGSVQVLEDQELTCQPEPLVVKGKRVPGGPQMIQLSLDGKRLYVTTSLYSAWDKQFYPNLIREGSVMLQIDVDTANGGLKLNPNFLVDFGKEPLGPALAHELRYPGGDCSSDIWI.

Position 2 is an N-acetylalanine (alanine 2). A phosphoserine mark is found at serine 111 and serine 467.

This sequence belongs to the selenium-binding protein family. In terms of assembly, interacts with USP33. In terms of processing, the N-terminus is blocked. In terms of tissue distribution, present in liver and colon (at protein level).

Its subcellular location is the nucleus. The protein resides in the cytoplasm. The protein localises to the cytosol. It localises to the membrane. The enzyme catalyses methanethiol + O2 + H2O = hydrogen sulfide + formaldehyde + H2O2 + H(+). Its pathway is organosulfur degradation. Its function is as follows. Catalyzes the oxidation of methanethiol, an organosulfur compound known to be produced in substantial amounts by gut bacteria. Selenium-binding protein which may be involved in the sensing of reactive xenobiotics in the cytoplasm. May be involved in intra-Golgi protein transport. The polypeptide is Methanethiol oxidase (Selenbp1) (Rattus norvegicus (Rat)).